A 320-amino-acid polypeptide reads, in one-letter code: Nucleotide-binding protein Acid_7395 (320 aa).

Residues 1 to 34 (MPLRKKGAATTKAAATRKDSAKAPASSKRKDAPQ) form a disordered region. ATP is bound at residue 44 to 51 (GLSGSGKG). Residue 94-97 (DIRE) participates in GTP binding.

Belongs to the RapZ-like family.

Functionally, displays ATPase and GTPase activities. This is Nucleotide-binding protein Acid_7395 from Solibacter usitatus (strain Ellin6076).